Reading from the N-terminus, the 37-residue chain is Photosystem II reaction center protein T (37 aa).

The chain crosses the membrane as a helical span at residues 3–23; sequence ALVYTFLLVSTLGIIFFAIFF.

The protein belongs to the PsbT family. As to quaternary structure, PSII is composed of 1 copy each of membrane proteins PsbA, PsbB, PsbC, PsbD, PsbE, PsbF, PsbH, PsbI, PsbJ, PsbK, PsbL, PsbM, PsbT, PsbY, PsbZ, Psb30/Ycf12, at least 3 peripheral proteins of the oxygen-evolving complex and a large number of cofactors. It forms dimeric complexes.

The protein localises to the plastid. It is found in the chloroplast thylakoid membrane. In terms of biological role, found at the monomer-monomer interface of the photosystem II (PS II) dimer, plays a role in assembly and dimerization of PSII. PSII is a light-driven water plastoquinone oxidoreductase, using light energy to abstract electrons from H(2)O, generating a proton gradient subsequently used for ATP formation. The polypeptide is Photosystem II reaction center protein T (Cucumis sativus (Cucumber)).